The sequence spans 425 residues: Cysteate synthase (425 aa).

Lys-106 carries the post-translational modification N6-(pyridoxal phosphate)lysine. Positions 132 and 382 each coordinate pyridoxal 5'-phosphate.

Belongs to the threonine synthase family. Cysteate synthase subfamily. In terms of assembly, homotrimer. It depends on pyridoxal 5'-phosphate as a cofactor.

It carries out the reaction O-phospho-L-serine + sulfite + H(+) = L-cysteate + phosphate. The protein operates within cofactor biosynthesis; coenzyme M biosynthesis. Its function is as follows. Specifically catalyzes the beta-elimination of phosphate from L-phosphoserine and the beta-addition of sulfite to the dehydroalanine intermediate to produce L-cysteate. In Methanosphaerula palustris (strain ATCC BAA-1556 / DSM 19958 / E1-9c), this protein is Cysteate synthase.